Here is a 101-residue protein sequence, read N- to C-terminus: Large ribosomal subunit protein bL20 (101 aa).

Belongs to the bacterial ribosomal protein bL20 family.

Its function is as follows. Binds directly to 23S ribosomal RNA and is necessary for the in vitro assembly process of the 50S ribosomal subunit. It is not involved in the protein synthesizing functions of that subunit. This Carsonella ruddii (strain PV) protein is Large ribosomal subunit protein bL20 (rplT).